The chain runs to 325 residues: Probable transcription factor At4g01260 (325 aa).

Residues 1–98 (MAPKQLKKIE…SMGEEDVKKK (98 aa)) are disordered. 2 stretches are compositionally biased toward low complexity: residues 23–32 (ASSGESATSG) and 49–69 (KPVV…ESST). The segment covering 73-83 (RSFEKTDEMSK) has biased composition (basic and acidic residues).

This sequence belongs to the GeBP family.

In Arabidopsis thaliana (Mouse-ear cress), this protein is Probable transcription factor At4g01260.